The chain runs to 503 residues: Protein ERGIC-53-like (503 aa).

An N-terminal signal peptide occupies residues M1–R25. Residues S26 to R439 lie on the Lumenal side of the membrane. Residues R32–L253 form the L-type lectin-like domain. The cysteines at positions 177 and 216 are disulfide-linked. The helical transmembrane segment at T440–F460 threads the bilayer. Topologically, residues R461 to A503 are cytoplasmic.

In terms of tissue distribution, predominantly expressed in the sublingual salivary gland, in the mucous cells of the acini, but not in the serous cells, nor in the duct system (at protein level). Not detected in the submandilar, nor the parotid glands. Expressed in the mucous glands, but not detected in the serous glands (at protein level). Besides the salivary glands, expressed in the Brunner's glands in the duodenum, but no other mucous or serous glands (at protein level).

It localises to the endoplasmic reticulum-Golgi intermediate compartment membrane. The sequence is that of Protein ERGIC-53-like (Lman1l) from Rattus norvegicus (Rat).